We begin with the raw amino-acid sequence, 59 residues long: Large ribosomal subunit protein uL30 (59 aa).

Belongs to the universal ribosomal protein uL30 family. Part of the 50S ribosomal subunit.

This Citrobacter koseri (strain ATCC BAA-895 / CDC 4225-83 / SGSC4696) protein is Large ribosomal subunit protein uL30.